We begin with the raw amino-acid sequence, 370 residues long: Aminomethyltransferase (370 aa).

The protein belongs to the GcvT family. The glycine cleavage system is composed of four proteins: P, T, L and H.

The catalysed reaction is N(6)-[(R)-S(8)-aminomethyldihydrolipoyl]-L-lysyl-[protein] + (6S)-5,6,7,8-tetrahydrofolate = N(6)-[(R)-dihydrolipoyl]-L-lysyl-[protein] + (6R)-5,10-methylene-5,6,7,8-tetrahydrofolate + NH4(+). The glycine cleavage system catalyzes the degradation of glycine. This Prochlorococcus marinus (strain MIT 9215) protein is Aminomethyltransferase.